Reading from the N-terminus, the 111-residue chain is Small ribosomal subunit protein bS16 (111 aa).

The protein belongs to the bacterial ribosomal protein bS16 family.

The sequence is that of Small ribosomal subunit protein bS16 from Rickettsia typhi (strain ATCC VR-144 / Wilmington).